The chain runs to 62 residues: 2-hydroxymuconate tautomerase (62 aa).

The active-site Proton acceptor; via imino nitrogen is the Pro-2. 9–12 (LEGR) provides a ligand contact to substrate.

Belongs to the 4-oxalocrotonate tautomerase family. Homohexamer.

It carries out the reaction (2Z,4E)-2-hydroxyhexa-2,4-dienedioate = (3E)-2-oxohex-3-enedioate. Its function is as follows. Catalyzes both 1,3- and 1,5-keto-enol tautomerization of the diacid 2-hydroxymuconate (2-hydroxy-2,4-hexadienedioate) to produce 2-oxo-4-hexenedioate. This reaction is highly stereoselective and produces a mixture of stereoisomers, where the (3S)-isomer of 2-oxo-4-hexenedioate predominates. Also catalyzes the tautomerization of 2-hydroxymuconate to 2-oxo-3-hexenedioate, however this reaction is slower and occurs after the tautomerization of 2-hydroxymuconate to 2-oxo-4-hexenedioate. Using 2-hydroxy-2,4-pentadienoate, phenylenolpyruvate, (p-hydroxyphenyl)-enolpyruvate and 2-hydroxy-2,4-heptadiene-1,7-dioate, YwhB is a highly efficient 1,3-keto-enol tautomerase, but clearly not a 1,5-keto-enol tautomerase. Tautomerization of the two monoacids 2-hydroxy-2,4-pentadienoate and phenylenolpyruvate produces a mixture of stereoisomers, where the (3R)-isomers predominate. This chain is 2-hydroxymuconate tautomerase (ywhB), found in Bacillus subtilis (strain 168).